The sequence spans 876 residues: Valine--tRNA ligase (876 aa).

Positions 44–54 (PNVTGKLHLGH) match the 'HIGH' region motif. Residues 520-524 (KMSKS) carry the 'KMSKS' region motif. Residue Lys523 coordinates ATP. Residues 805–876 (LEGLIDMDKE…VKARIEQLKA (72 aa)) are a coiled coil.

The protein belongs to the class-I aminoacyl-tRNA synthetase family. ValS type 1 subfamily. As to quaternary structure, monomer.

The protein resides in the cytoplasm. It catalyses the reaction tRNA(Val) + L-valine + ATP = L-valyl-tRNA(Val) + AMP + diphosphate. Its function is as follows. Catalyzes the attachment of valine to tRNA(Val). As ValRS can inadvertently accommodate and process structurally similar amino acids such as threonine, to avoid such errors, it has a 'posttransfer' editing activity that hydrolyzes mischarged Thr-tRNA(Val) in a tRNA-dependent manner. This Staphylococcus aureus (strain JH1) protein is Valine--tRNA ligase.